Here is a 643-residue protein sequence, read N- to C-terminus: Protein THEMIS2 (643 aa).

CABIT regions lie at residues 1 to 238 (MEPV…TASS) and 239 to 514 (RHVH…KAKG). The segment at 546-631 (EIQAPPPRPP…RQDLDDDEHD (86 aa)) is disordered. T593 is subject to Phosphothreonine. Positions 609 to 619 (PAHRKGHRPAK) are enriched in basic residues. Y632 is modified (phosphotyrosine).

It belongs to the themis family. As to quaternary structure, interacts with VAV1. Interacts with LAT. Interacts constitutively with GRB2, LYN and PLCG2; these interactions increase the activation of PLCG2 and its downstream pathways following B cell receptor stimulation. Post-translationally, phosphorylation at Tyr-632 is induced by LPS. Phosphorylated by Src kinases (Lck or Fyn) following BCR engagement. In terms of tissue distribution, expressed in different endometrial adenocarcinoma cell lines and various other cell lines apart from the prostate cell line LNCaP and the ovarian cancer cell line BG1.

Its subcellular location is the nucleus. The protein resides in the cytoplasm. Functionally, may constitute a control point in macrophage inflammatory response, promoting LPS-induced TLR4-mediated TNF production. Determines the threshold for activation of B cells by low-affinity and low-avidity ligands via PLCG2 activation and its downstream pathways. The sequence is that of Protein THEMIS2 from Homo sapiens (Human).